An 84-amino-acid chain; its full sequence is LYR motif-containing protein 4B (84 aa).

The protein belongs to the complex I LYR family.

This is LYR motif-containing protein 4B (lyrm4b) from Salmo salar (Atlantic salmon).